The primary structure comprises 177 residues: 3-isopropylmalate dehydratase small subunit 1 (177 aa).

The disordered stretch occupies residues 157-177; sequence GRFPGEEPGAEASTETASAAE. Low complexity predominate over residues 162–177; sequence EEPGAEASTETASAAE.

The protein belongs to the LeuD family. LeuD type 2 subfamily. As to quaternary structure, heterodimer of LeuC and LeuD.

The enzyme catalyses (2R,3S)-3-isopropylmalate = (2S)-2-isopropylmalate. Its pathway is amino-acid biosynthesis; L-leucine biosynthesis; L-leucine from 3-methyl-2-oxobutanoate: step 2/4. In terms of biological role, catalyzes the isomerization between 2-isopropylmalate and 3-isopropylmalate, via the formation of 2-isopropylmaleate. The polypeptide is 3-isopropylmalate dehydratase small subunit 1 (leuD1) (Deinococcus radiodurans (strain ATCC 13939 / DSM 20539 / JCM 16871 / CCUG 27074 / LMG 4051 / NBRC 15346 / NCIMB 9279 / VKM B-1422 / R1)).